Here is a 556-residue protein sequence, read N- to C-terminus: 2-succinyl-5-enolpyruvyl-6-hydroxy-3-cyclohexene-1-carboxylate synthase (556 aa).

It belongs to the TPP enzyme family. MenD subfamily. Homodimer. Mg(2+) is required as a cofactor. The cofactor is Mn(2+). It depends on thiamine diphosphate as a cofactor.

It carries out the reaction isochorismate + 2-oxoglutarate + H(+) = 5-enolpyruvoyl-6-hydroxy-2-succinyl-cyclohex-3-ene-1-carboxylate + CO2. It functions in the pathway quinol/quinone metabolism; 1,4-dihydroxy-2-naphthoate biosynthesis; 1,4-dihydroxy-2-naphthoate from chorismate: step 2/7. It participates in quinol/quinone metabolism; menaquinone biosynthesis. Catalyzes the thiamine diphosphate-dependent decarboxylation of 2-oxoglutarate and the subsequent addition of the resulting succinic semialdehyde-thiamine pyrophosphate anion to isochorismate to yield 2-succinyl-5-enolpyruvyl-6-hydroxy-3-cyclohexene-1-carboxylate (SEPHCHC). This Shigella boydii serotype 4 (strain Sb227) protein is 2-succinyl-5-enolpyruvyl-6-hydroxy-3-cyclohexene-1-carboxylate synthase.